Reading from the N-terminus, the 550-residue chain is Probable terpene synthase 2 (550 aa).

Residues Asp305, Asp309, and Glu457 each coordinate Mg(2+). The DDXXD motif signature appears at Asp305–Asp309.

This sequence belongs to the terpene synthase family. Requires Mg(2+) as cofactor.

In terms of biological role, probable sesquiterpene synthase. This chain is Probable terpene synthase 2 (TPS2), found in Ricinus communis (Castor bean).